The chain runs to 319 residues: Acetyl-coenzyme A carboxylase carboxyl transferase subunit alpha (319 aa).

The 262-residue stretch at 35–296 (NIDEEVHRLR…KAQLLEDLAD (262 aa)) folds into the CoA carboxyltransferase C-terminal domain.

It belongs to the AccA family. Acetyl-CoA carboxylase is a heterohexamer composed of biotin carboxyl carrier protein (AccB), biotin carboxylase (AccC) and two subunits each of ACCase subunit alpha (AccA) and ACCase subunit beta (AccD).

It localises to the cytoplasm. The enzyme catalyses N(6)-carboxybiotinyl-L-lysyl-[protein] + acetyl-CoA = N(6)-biotinyl-L-lysyl-[protein] + malonyl-CoA. It participates in lipid metabolism; malonyl-CoA biosynthesis; malonyl-CoA from acetyl-CoA: step 1/1. Component of the acetyl coenzyme A carboxylase (ACC) complex. First, biotin carboxylase catalyzes the carboxylation of biotin on its carrier protein (BCCP) and then the CO(2) group is transferred by the carboxyltransferase to acetyl-CoA to form malonyl-CoA. The polypeptide is Acetyl-coenzyme A carboxylase carboxyl transferase subunit alpha (Salmonella paratyphi C (strain RKS4594)).